Here is a 146-residue protein sequence, read N- to C-terminus: Phospholipase A2 PS22 (146 aa).

A signal peptide spans 1–19; that stretch reads MYPAHLLVLLAVCVSLLGA. Positions 20 to 27 are excised as a propeptide; it reads ASVPPQPL. Cystine bridges form between cysteine 38/cysteine 98, cysteine 54/cysteine 145, cysteine 56/cysteine 72, cysteine 71/cysteine 126, cysteine 78/cysteine 119, cysteine 87/cysteine 112, and cysteine 105/cysteine 117. Ca(2+) contacts are provided by tyrosine 55, glycine 57, and glycine 59. Residue histidine 75 is part of the active site. Position 76 (aspartate 76) interacts with Ca(2+). The active site involves aspartate 120.

It belongs to the phospholipase A2 family. Group I subfamily. D49 sub-subfamily. The cofactor is Ca(2+). As to expression, expressed by the venom gland.

It localises to the secreted. It carries out the reaction a 1,2-diacyl-sn-glycero-3-phosphocholine + H2O = a 1-acyl-sn-glycero-3-phosphocholine + a fatty acid + H(+). Functionally, snake venom phospholipase A2 (PLA2) that inhibits collagen-induced platelet aggregation. PLA2 catalyzes the calcium-dependent hydrolysis of the 2-acyl groups in 3-sn-phosphoglycerides. This is Phospholipase A2 PS22 from Drysdalia coronoides (White-lipped snake).